The chain runs to 386 residues: DNA-directed RNA polymerase subunit Rpo1C (386 aa).

This sequence belongs to the RNA polymerase beta' chain family. As to quaternary structure, part of the RNA polymerase complex.

Its subcellular location is the cytoplasm. The enzyme catalyses RNA(n) + a ribonucleoside 5'-triphosphate = RNA(n+1) + diphosphate. Its function is as follows. DNA-dependent RNA polymerase (RNAP) catalyzes the transcription of DNA into RNA using the four ribonucleoside triphosphates as substrates. Forms part of the jaw domain. This is DNA-directed RNA polymerase subunit Rpo1C from Methanococcus maripaludis (strain C6 / ATCC BAA-1332).